Reading from the N-terminus, the 392-residue chain is Methylthioribose-1-phosphate isomerase (392 aa).

The active-site Proton donor is the Asp-253.

It belongs to the eIF-2B alpha/beta/delta subunits family. MtnA subfamily.

The protein resides in the cytoplasm. It localises to the nucleus. It catalyses the reaction 5-(methylsulfanyl)-alpha-D-ribose 1-phosphate = 5-(methylsulfanyl)-D-ribulose 1-phosphate. The protein operates within amino-acid biosynthesis; L-methionine biosynthesis via salvage pathway; L-methionine from S-methyl-5-thio-alpha-D-ribose 1-phosphate: step 1/6. Its function is as follows. Catalyzes the interconversion of methylthioribose-1-phosphate (MTR-1-P) into methylthioribulose-1-phosphate (MTRu-1-P). In Pyrenophora tritici-repentis (strain Pt-1C-BFP) (Wheat tan spot fungus), this protein is Methylthioribose-1-phosphate isomerase (mri1).